Consider the following 98-residue polypeptide: MTREKLSKDAITAALAELGDWSLATDGASIKRSFVFRNFSEAFAFMTRVALAAEKMDHHPDWSNVYKTVDVTLNTHDAGGVTALDIALAKKMNHYFGG.

The protein belongs to the pterin-4-alpha-carbinolamine dehydratase family.

It carries out the reaction (4aS,6R)-4a-hydroxy-L-erythro-5,6,7,8-tetrahydrobiopterin = (6R)-L-erythro-6,7-dihydrobiopterin + H2O. This is Putative pterin-4-alpha-carbinolamine dehydratase from Mesorhizobium japonicum (strain LMG 29417 / CECT 9101 / MAFF 303099) (Mesorhizobium loti (strain MAFF 303099)).